A 274-amino-acid polypeptide reads, in one-letter code: NH(3)-dependent NAD(+) synthetase (274 aa).

Residue 46-53 coordinates ATP; it reads GISGGQDS. Asp52 contributes to the Mg(2+) binding site. Residue Arg140 participates in deamido-NAD(+) binding. ATP is bound at residue Thr160. Glu165 provides a ligand contact to Mg(2+). Lys173 and Asp180 together coordinate deamido-NAD(+). ATP is bound by residues Lys189 and Thr211. 260-261 serves as a coordination point for deamido-NAD(+); it reads HK.

The protein belongs to the NAD synthetase family. In terms of assembly, homodimer.

It catalyses the reaction deamido-NAD(+) + NH4(+) + ATP = AMP + diphosphate + NAD(+) + H(+). The protein operates within cofactor biosynthesis; NAD(+) biosynthesis; NAD(+) from deamido-NAD(+) (ammonia route): step 1/1. Functionally, catalyzes the ATP-dependent amidation of deamido-NAD to form NAD. Uses ammonia as a nitrogen source. In Streptococcus pneumoniae serotype 2 (strain D39 / NCTC 7466), this protein is NH(3)-dependent NAD(+) synthetase.